A 611-amino-acid polypeptide reads, in one-letter code: MLAYTHGTWLLLLLLLVAGACARPEIAHTPDPAALGEESTPHAHAHPQARHHHHAHPHAPLKEDEQGTAIPAPILTTDNVGIGETTTASSLAETQSMSDPGSVTDTTSTSTSHSTSTTSTTSPAPLPPAAPEQPEYLKHCFYAEEQLCGHTFDGRAETSEGQGSTVAQSEAQNRGGQGNSQCQCREHPTRPNSWYCCNISQLTMISSCSNISKWTNLHVRNMTVEDMDLSNPIFRSLQSLAVTDGNITRLVNAFPRLSALKCLNISNNNISEIHSRAVKDVPHLEFFGMSNNNLSLVPHRNQNKNITLDISGNMRMLCTPLNEIIYTESINFLNPKHSYCQYNATHTWFQSTDKVSVEQLENRKRCVTNCPVIPNYGSCNCTLENIMIIQDNQSKPQCHVDCSNLGLVELPQRLPDNTFMLNITNNKITSLGDYFHTNPTYHNINRLLADNNQISSIYEFEGTKFIETFQRIYMRNNSLSKIPEYFLNNALMDSGLGRRIYLAGNKLQCDCNSAKTLQNWLKERSSDIPDYMEIRCRNMPQRVIELQEAKLCQSPPDWTDYIYYLIAAEVLLLLALITKVSYDYWVFKTAGYLPWPASKMPKLPCDWLCES.

The N-terminal stretch at 1-22 is a signal peptide; the sequence is MLAYTHGTWLLLLLLLVAGACA. 3 disordered regions span residues 31 to 64, 90 to 132, and 154 to 185; these read DPAALGEESTPHAHAHPQARHHHHAHPHAPLKED, SLAE…AAPE, and GRAETSEGQGSTVAQSEAQNRGGQGNSQCQCR. Basic residues predominate over residues 43 to 59; it reads AHAHPQARHHHHAHPHA. Residues 90–101 are compositionally biased toward polar residues; the sequence is SLAETQSMSDPG. Over residues 102–123 the composition is skewed to low complexity; it reads SVTDTTSTSTSHSTSTTSTTSP. The segment covering 159-183 has biased composition (polar residues); that stretch reads SEGQGSTVAQSEAQNRGGQGNSQCQ. 4 N-linked (GlcNAc...) asparagine glycosylation sites follow: Asn-221, Asn-246, Asn-264, and Asn-269. LRR repeat units lie at residues 236 to 257, 259 to 280, 283 to 304, and 313 to 334; these read SLQSLAVTDGNITRLVNAFPRL, ALKCLNISNNNISEIHSRAVKD, HLEFFGMSNNNLSLVPHRNQNK, and NMRMLCTPLNEIIYTESINFLN. In terms of domain architecture, LRRNT spans 361–416; it reads ENRKRCVTNCPVIPNYGSCNCTLENIMIIQDNQSKPQCHVDCSNLGLVELPQRLPD. LRR repeat units lie at residues 417-438, 443-464, and 468-489; these read NTFMLNITNNKITSLGDYFHTN, NINRLLADNNQISSIYEFEGTK, and TFQRIYMRNNSLSKIPEYFLNN. The LRRCT domain maps to 505–554; the sequence is NKLQCDCNSAKTLQNWLKERSSDIPDYMEIRCRNMPQRVIELQEAKLCQS.

Its function is as follows. Has a role in the ecdysone induced cascade; probably indirect control of 'late' ecdysone genes. The protein is Protein halfway of Drosophila melanogaster (Fruit fly).